The sequence spans 331 residues: Ketol-acid reductoisomerase (NADP(+)) (331 aa).

Positions 2-182 (ARMYYDQDAN…GGTRAGILET (181 aa)) constitute a KARI N-terminal Rossmann domain. Residues 25–28 (YGSQ), Ser51, Ser53, and 83–86 (DEVQ) each bind NADP(+). The active site involves His108. Gly134 provides a ligand contact to NADP(+). The 146-residue stretch at 183–328 (TFREETETDL…KDLRAMFSWL (146 aa)) folds into the KARI C-terminal knotted domain. 4 residues coordinate Mg(2+): Asp191, Glu195, Glu227, and Glu231. Ser252 is a binding site for substrate.

Belongs to the ketol-acid reductoisomerase family. In terms of assembly, homooctamer. Requires Mg(2+) as cofactor.

It carries out the reaction (2R)-2,3-dihydroxy-3-methylbutanoate + NADP(+) = (2S)-2-acetolactate + NADPH + H(+). It catalyses the reaction (2R,3R)-2,3-dihydroxy-3-methylpentanoate + NADP(+) = (S)-2-ethyl-2-hydroxy-3-oxobutanoate + NADPH + H(+). The protein operates within amino-acid biosynthesis; L-isoleucine biosynthesis; L-isoleucine from 2-oxobutanoate: step 2/4. Its pathway is amino-acid biosynthesis; L-valine biosynthesis; L-valine from pyruvate: step 2/4. Involved in the biosynthesis of branched-chain amino acids (BCAA). Catalyzes an alkyl-migration followed by a ketol-acid reduction of (S)-2-acetolactate (S2AL) to yield (R)-2,3-dihydroxy-isovalerate. In the isomerase reaction, S2AL is rearranged via a Mg-dependent methyl migration to produce 3-hydroxy-3-methyl-2-ketobutyrate (HMKB). In the reductase reaction, this 2-ketoacid undergoes a metal-dependent reduction by NADPH to yield (R)-2,3-dihydroxy-isovalerate. The polypeptide is Ketol-acid reductoisomerase (NADP(+)) (Synechocystis sp. (strain ATCC 27184 / PCC 6803 / Kazusa)).